A 141-amino-acid polypeptide reads, in one-letter code: Nucleoside diphosphate kinase (141 aa).

ATP contacts are provided by lysine 11, phenylalanine 59, arginine 87, threonine 93, arginine 104, and asparagine 114. The active-site Pros-phosphohistidine intermediate is the histidine 117.

This sequence belongs to the NDK family. Homotetramer. It depends on Mg(2+) as a cofactor.

It localises to the cytoplasm. It carries out the reaction a 2'-deoxyribonucleoside 5'-diphosphate + ATP = a 2'-deoxyribonucleoside 5'-triphosphate + ADP. The enzyme catalyses a ribonucleoside 5'-diphosphate + ATP = a ribonucleoside 5'-triphosphate + ADP. Major role in the synthesis of nucleoside triphosphates other than ATP. The ATP gamma phosphate is transferred to the NDP beta phosphate via a ping-pong mechanism, using a phosphorylated active-site intermediate. The sequence is that of Nucleoside diphosphate kinase from Yersinia enterocolitica serotype O:8 / biotype 1B (strain NCTC 13174 / 8081).